The chain runs to 208 residues: Uracil phosphoribosyltransferase (208 aa).

Residues Arg-78, Arg-103, and Asp-130–Ser-138 contribute to the 5-phospho-alpha-D-ribose 1-diphosphate site. Uracil-binding positions include Ile-193 and Gly-198–Ala-200. Residue Asp-199 coordinates 5-phospho-alpha-D-ribose 1-diphosphate.

This sequence belongs to the UPRTase family. Requires Mg(2+) as cofactor.

The enzyme catalyses UMP + diphosphate = 5-phospho-alpha-D-ribose 1-diphosphate + uracil. Its pathway is pyrimidine metabolism; UMP biosynthesis via salvage pathway; UMP from uracil: step 1/1. With respect to regulation, allosterically activated by GTP. Catalyzes the conversion of uracil and 5-phospho-alpha-D-ribose 1-diphosphate (PRPP) to UMP and diphosphate. This is Uracil phosphoribosyltransferase from Wolinella succinogenes (strain ATCC 29543 / DSM 1740 / CCUG 13145 / JCM 31913 / LMG 7466 / NCTC 11488 / FDC 602W) (Vibrio succinogenes).